Consider the following 281-residue polypeptide: MTKYTNADELKSLTLGQKTEYKHTYEPELLQAVPRSLNRDDLALGDELPFVGCDVWTLYELSWLNQNGLPQVAVGEVALPATSPNLVESKSFKLYLNSFNQTKFTSWDEVKETLVKDLSACAGETVKVDVFPVQRYSQQPIVDMQGECIDDQDIIIDDYEFNAAYLESSTSDAEIEETLHSHLLKSNCLITNQPDWGSVEIQYKGKKIDREKLLRYLISFRQHNEFHEQCVERIYTDIMKYCAPESLTVFARYTRRGGLDINPFRSSHLLAPKDNLRLARQ.

87–89 contacts substrate; the sequence is VES. 89-90 contacts NADPH; that stretch reads SK. The Thioimide intermediate role is filled by Cys-188. Asp-195 functions as the Proton donor in the catalytic mechanism. 227 to 228 lines the substrate pocket; it reads HE. Residue 256-257 coordinates NADPH; it reads RG.

It belongs to the GTP cyclohydrolase I family. QueF type 2 subfamily. Homodimer.

The protein resides in the cytoplasm. The catalysed reaction is 7-aminomethyl-7-carbaguanine + 2 NADP(+) = 7-cyano-7-deazaguanine + 2 NADPH + 3 H(+). Its pathway is tRNA modification; tRNA-queuosine biosynthesis. Its function is as follows. Catalyzes the NADPH-dependent reduction of 7-cyano-7-deazaguanine (preQ0) to 7-aminomethyl-7-deazaguanine (preQ1). The chain is NADPH-dependent 7-cyano-7-deazaguanine reductase from Aliivibrio fischeri (strain MJ11) (Vibrio fischeri).